We begin with the raw amino-acid sequence, 61 residues long: Large ribosomal subunit protein uL30 (61 aa).

This sequence belongs to the universal ribosomal protein uL30 family. Part of the 50S ribosomal subunit.

This is Large ribosomal subunit protein uL30 from Maricaulis maris (strain MCS10) (Caulobacter maris).